We begin with the raw amino-acid sequence, 706 residues long: Glutamine-dependent NAD(+) synthetase (706 aa).

In terms of domain architecture, CN hydrolase spans 5–275; the sequence is VTVATCALNQ…VEVLTATLDL (271 aa). The active-site Proton acceptor; for glutaminase activity is E45. K114 acts as the For glutaminase activity in catalysis. The Nucleophile; for glutaminase activity role is filled by C175. The tract at residues 325–706 is ligase; it reads YHSPAEEISL…RQRQELDGVD (382 aa). Position 355–362 (355–362) interacts with ATP; sequence PLSGGVDS. Residue S357 is part of the active site.

In the C-terminal section; belongs to the NAD synthetase family. In terms of assembly, homohexamer.

It carries out the reaction deamido-NAD(+) + L-glutamine + ATP + H2O = L-glutamate + AMP + diphosphate + NAD(+) + H(+). Its pathway is cofactor biosynthesis; NAD(+) biosynthesis; NAD(+) from deamido-NAD(+) (L-Gln route): step 1/1. Catalyzes the ATP-dependent amidation of deamido-NAD to form NAD. Uses L-glutamine as a nitrogen source. This is Glutamine-dependent NAD(+) synthetase (NADSYN1) from Bos taurus (Bovine).